We begin with the raw amino-acid sequence, 626 residues long: Probable potassium transport system protein Kup 3 (626 aa).

12 helical membrane passes run 10 to 30 (LATL…TSPL), 51 to 71 (VLGI…LKYV), 107 to 127 (VLLG…TPAI), 141 to 161 (PAFK…LFIF), 173 to 193 (FGPV…AAIV), 216 to 236 (LLGF…EALY), 251 to 271 (WLGY…ALLL), 293 to 313 (LVAL…SGAF), 341 to 361 (IYLP…VIEF), 371 to 391 (YGIA…AVAV), 401 to 421 (AMLG…ANSV), and 423 to 443 (IADG…LLTT).

Belongs to the HAK/KUP transporter (TC 2.A.72) family.

It localises to the cell inner membrane. The enzyme catalyses K(+)(in) + H(+)(in) = K(+)(out) + H(+)(out). Its function is as follows. Transport of potassium into the cell. Likely operates as a K(+):H(+) symporter. The sequence is that of Probable potassium transport system protein Kup 3 from Dechloromonas aromatica (strain RCB).